We begin with the raw amino-acid sequence, 449 residues long: N-succinylarginine dihydrolase (449 aa).

Residues 19-28, Asn-110, and 137-138 each bind substrate; these read GGLSYGNVAS and HR. A disordered region spans residues 23-43; sequence YGNVASQSNSQQGSNPREAAR. Positions 25 to 37 are enriched in polar residues; sequence NVASQSNSQQGSN. The active site involves Glu-174. Arg-214 lines the substrate pocket. His-250 is an active-site residue. Asp-252 and Asn-365 together coordinate substrate. The Nucleophile role is filled by Cys-371.

This sequence belongs to the succinylarginine dihydrolase family. Homodimer.

The catalysed reaction is N(2)-succinyl-L-arginine + 2 H2O + 2 H(+) = N(2)-succinyl-L-ornithine + 2 NH4(+) + CO2. Its pathway is amino-acid degradation; L-arginine degradation via AST pathway; L-glutamate and succinate from L-arginine: step 2/5. In terms of biological role, catalyzes the hydrolysis of N(2)-succinylarginine into N(2)-succinylornithine, ammonia and CO(2). This chain is N-succinylarginine dihydrolase, found in Pseudomonas putida (strain GB-1).